The primary structure comprises 320 residues: Glycerol-3-phosphate dehydrogenase [NAD(P)+] (320 aa).

S14, F15, R35, and K109 together coordinate NADPH. The sn-glycerol 3-phosphate site is built by K109 and G137. Position 141 (A141) interacts with NADPH. 5 residues coordinate sn-glycerol 3-phosphate: K192, D248, S258, R259, and N260. The active-site Proton acceptor is K192. NADPH is bound at residue R259. L283 and E285 together coordinate NADPH.

This sequence belongs to the NAD-dependent glycerol-3-phosphate dehydrogenase family.

It localises to the cytoplasm. It carries out the reaction sn-glycerol 3-phosphate + NAD(+) = dihydroxyacetone phosphate + NADH + H(+). The enzyme catalyses sn-glycerol 3-phosphate + NADP(+) = dihydroxyacetone phosphate + NADPH + H(+). It participates in membrane lipid metabolism; glycerophospholipid metabolism. In terms of biological role, catalyzes the reduction of the glycolytic intermediate dihydroxyacetone phosphate (DHAP) to sn-glycerol 3-phosphate (G3P), the key precursor for phospholipid synthesis. The polypeptide is Glycerol-3-phosphate dehydrogenase [NAD(P)+] (Rickettsia typhi (strain ATCC VR-144 / Wilmington)).